We begin with the raw amino-acid sequence, 817 residues long: DNA gyrase subunit A (817 aa).

Residues 39–505 enclose the Topo IIA-type catalytic domain; the sequence is LPDARDGLKP…AVEDVSIEDL (467 aa). The O-(5'-phospho-DNA)-tyrosine intermediate role is filled by Tyr-127. The GyrA-box signature appears at 532-538; it reads QGRGGKG.

Belongs to the type II topoisomerase GyrA/ParC subunit family. As to quaternary structure, heterotetramer, composed of two GyrA and two GyrB chains. In the heterotetramer, GyrA contains the active site tyrosine that forms a transient covalent intermediate with DNA, while GyrB binds cofactors and catalyzes ATP hydrolysis.

It is found in the cytoplasm. The enzyme catalyses ATP-dependent breakage, passage and rejoining of double-stranded DNA.. In terms of biological role, a type II topoisomerase that negatively supercoils closed circular double-stranded (ds) DNA in an ATP-dependent manner to modulate DNA topology and maintain chromosomes in an underwound state. Negative supercoiling favors strand separation, and DNA replication, transcription, recombination and repair, all of which involve strand separation. Also able to catalyze the interconversion of other topological isomers of dsDNA rings, including catenanes and knotted rings. Type II topoisomerases break and join 2 DNA strands simultaneously in an ATP-dependent manner. This chain is DNA gyrase subunit A, found in Aminobacterium colombiense (strain DSM 12261 / ALA-1).